A 394-amino-acid polypeptide reads, in one-letter code: Phosphatidylinositol 4-phosphate 5-kinase-like protein 1 (394 aa).

Residues 36–393 form the PIPK domain; sequence DKQSRLGLFE…RLCQWVEAHT (358 aa).

As to quaternary structure, heterodimerizes with other type I phosphatidylinositol 4-phosphate 5-kinase.

The protein localises to the cytoplasm. It is found in the membrane. It carries out the reaction a 1,2-diacyl-sn-glycero-3-phospho-(1D-myo-inositol 4-phosphate) + ATP = a 1,2-diacyl-sn-glycero-3-phospho-(1D-myo-inositol-4,5-bisphosphate) + ADP + H(+). Functionally, may act as a scaffold to localize and regulate type I PI(4)P 5-kinases to specific compartments within the cell, where they generate PI(4,5)P2 for actin nucleation, signaling and scaffold protein recruitment and conversion to PI(3,4,5)P3. This chain is Phosphatidylinositol 4-phosphate 5-kinase-like protein 1 (PIP5KL1), found in Homo sapiens (Human).